Consider the following 1290-residue polypeptide: 1-phosphatidylinositol 4,5-bisphosphate phosphodiesterase gamma-1 (1290 aa).

Position 2 is an N-acetylalanine (Ala-2). Residues 27–142 (RSLEVGTVMT…WIKGLTWLME (116 aa)) enclose the PH 1 domain. One can recognise an EF-hand domain in the interval 152-187 (QIERWLRKQFYSVDRNREDRISAKDLKNMLSQVNYR). Ca(2+)-binding residues include Asp-165, Asn-167, Glu-169, Arg-171, and Asp-176. One can recognise a PI-PLC X-box domain in the interval 320–464 (ETMNNPLSHY…LKRKILIKHK (145 aa)). Residues His-335 and His-380 contribute to the active site. The 35-residue stretch at 489–523 (SIKNGILYLEDPVNHEWYPHYFVLTSSKIYYSEET) folds into the PH 2; first part domain. Tyr-506 is subject to Phosphotyrosine. Positions 522–546 (ETSSDQGNEDEEEPKEASGSTELHS) are disordered. 2 consecutive SH2 domains span residues 550–657 (WFHG…SEPV) and 668–756 (WYHA…RYPI). At Tyr-771 the chain carries Phosphotyrosine; by SYK. Tyr-775 carries the phosphotyrosine modification. Tyr-783 bears the Phosphotyrosine; by ITK, SYK and TXK mark. The SH3 domain maps to 791–851 (TFKCAVKALF…PSNYVEEMIN (61 aa)). One can recognise a PH 2; second part domain in the interval 895–931 (FVFSISMPSVAQWSLDVAADSQEELQDWVKKIREVAQ). The region spanning 953-1070 (LSELVVYCRP…GYVLQPSTMR (118 aa)) is the PI-PLC Y-box domain. Tyr-977 is subject to Phosphotyrosine. Residues 1071–1194 (DEAFDPFDKS…TGYRAVPLKN (124 aa)) enclose the C2 domain. Ser-1221, Ser-1227, Ser-1233, and Ser-1248 each carry phosphoserine. Tyr-1253 carries the phosphotyrosine modification. A Phosphoserine modification is found at Ser-1263. The disordered stretch occupies residues 1271 to 1290 (FDSRERRAPRRTRVNGDNRL).

Interacts with AGAP2 via its SH3 domain. Interacts (via SH2 domain) with RET. Interacts with FLT1 (tyrosine-phosphorylated). Interacts (via SH2 domain) with FGFR1, FGFR2, FGFR3 and FGFR4 (phosphorylated). Interacts with LAT (phosphorylated) upon TCR activation. Interacts (via SH3 domain) with the Pro-rich domain of TNK1. Associates with BLNK, VAV1, GRB2 and NCK1 in a B-cell antigen receptor-dependent fashion. Interacts with CBLB in activated T-cells; which inhibits phosphorylation. Interacts with SHB. Interacts (via SH3 domain) with the Arg/Gly-rich-flanked Pro-rich domains of KHDRBS1/SAM68. This interaction is selectively regulated by arginine methylation of KHDRBS1/SAM68. Interacts with INPP5D/SHIP1, THEMIS and CLNK. Interacts with AXL, FLT4 and KIT. Interacts with RALGPS1. Interacts (via the SH2 domains) with VIL1 (phosphorylated at C-terminus tyrosine phosphorylation sites). Interacts (via SH2 domain) with PDGFRA and PDGFRB (tyrosine phosphorylated). Interacts with PIP5K1C. Interacts with NTRK1 and NTRK2 (phosphorylated upon ligand-binding). Interacts with SYK; activates PLCG1. Interacts with GRB2, LAT and THEMIS upon TCR activation in thymocytes. Interacts with TESPA1; the association is increased with prolonged stimulation of the TCR and may facilitate the assembly of the LAT signalosome. Interacts (via C-terminal proline-rich domain (PRD)) with PLCG1 (via SH3 domain); this interaction leads to guanine nucleotide exchange from PlCG1 to DNM1 and enhances DNM1-dependent endocytosis. Requires Ca(2+) as cofactor. In terms of processing, ubiquitinated by CBLB in activated T-cells. Post-translationally, tyrosine phosphorylated in response to signaling via activated FLT3, KIT and PDGFRA. Tyrosine phosphorylated by activated FGFR1, FGFR2, FGFR3 and FGFR4. Tyrosine phosphorylated by activated FLT1 and KDR. Tyrosine phosphorylated by activated PDGFRB. The receptor-mediated activation of PLCG1 involves its phosphorylation by tyrosine kinases, in response to ligation of a variety of growth factor receptors and immune system receptors. For instance, SYK phosphorylates and activates PLCG1 in response to ligation of the B-cell receptor. May be dephosphorylated by PTPRJ. Phosphorylated by ITK and TXK on Tyr-783 upon TCR activation in T-cells.

The protein resides in the cell projection. It is found in the lamellipodium. The protein localises to the ruffle. It carries out the reaction a 1,2-diacyl-sn-glycero-3-phospho-(1D-myo-inositol-4,5-bisphosphate) + H2O = 1D-myo-inositol 1,4,5-trisphosphate + a 1,2-diacyl-sn-glycerol + H(+). It catalyses the reaction a 1,2-diacyl-sn-glycero-3-phospho-(1D-myo-inositol) + H2O = 1D-myo-inositol 1-phosphate + a 1,2-diacyl-sn-glycerol + H(+). Activated by phosphorylation on tyrosine residues. In terms of biological role, mediates the production of the second messenger molecules diacylglycerol (DAG) and inositol 1,4,5-trisphosphate (IP3). Plays an important role in the regulation of intracellular signaling cascades. Becomes activated in response to ligand-mediated activation of receptor-type tyrosine kinases, such as PDGFRA, PDGFRB, EGFR, FGFR1, FGFR2, FGFR3 and FGFR4. Plays a role in actin reorganization and cell migration. Guanine nucleotide exchange factor that binds the GTPase DNM1 and catalyzes the dissociation of GDP, allowing a GTP molecule to bind in its place, therefore enhancing DNM1-dependent endocytosis. The sequence is that of 1-phosphatidylinositol 4,5-bisphosphate phosphodiesterase gamma-1 from Rattus norvegicus (Rat).